Reading from the N-terminus, the 306-residue chain is Curved DNA-binding protein (306 aa).

The 65-residue stretch at 5–69 folds into the J domain; that stretch reads DYYAIMGVKP…QRRAEYDQMW (65 aa).

The protein resides in the cytoplasm. It localises to the nucleoid. Its function is as follows. DNA-binding protein that preferentially recognizes a curved DNA sequence. It is probably a functional analog of DnaJ; displays overlapping activities with DnaJ, but functions under different conditions, probably acting as a molecular chaperone in an adaptive response to environmental stresses other than heat shock. Lacks autonomous chaperone activity; binds native substrates and targets them for recognition by DnaK. Its activity is inhibited by the binding of CbpM. This is Curved DNA-binding protein from Shigella boydii serotype 18 (strain CDC 3083-94 / BS512).